The primary structure comprises 454 residues: Zinc finger protein 474 (454 aa).

The segment at 48-85 (RGEKIKTNPRKNRPGTVILSKQSSRRIMSGSQPRPPVI) is disordered. The segment covering 66 to 79 (LSKQSSRRIMSGSQ) has biased composition (polar residues). Residues 91 to 120 (GFRVCYICGREFGSQSLGIHEPQCLEKWRV) form a C2HC/C3H-type 1 zinc finger. Residues Cys95, Cys98, His110, and Cys114 each contribute to the Zn(2+) site. Residues 125–146 (LPKHLRRPEPSKPPPFSGSGSY) are disordered. 5 consecutive C2HC/C3H-type zinc fingers follow at residues 162–191 (QLLP…KVEG), 218–247 (RTVI…KWKV), 281–310 (QLVS…QPSG), 352–381 (PTIV…KWHN), and 425–454 (QLVP…KVAK). Cys166, Cys169, His181, Cys185, Cys222, Cys225, His237, and Cys241 together coordinate Zn(2+). A disordered region spans residues 256-282 (FRQPLPQKPQPLLTGQPKHAGPRQGQL). Zn(2+)-binding residues include Cys285, Cys288, His300, Cys304, Cys356, Cys359, His371, Cys375, Cys429, Cys432, His444, and Cys448. Positions 299–345 (VHQRSCKAQPSGPKVQDLTLGSRGGLKESTNPKPQRNMAAPPVTDKP) are disordered.

It depends on Zn(2+) as a cofactor.

The sequence is that of Zinc finger protein 474 (ZNF474) from Bos taurus (Bovine).